Consider the following 1284-residue polypeptide: DNA topoisomerase 2, mitochondrial (1284 aa).

The transit peptide at 1 to 35 directs the protein to the mitochondrion; the sequence is MSKLLNNNNHKNLTNYLKFGKGIINNLNNKSKQVG. ATP contacts are provided by residues Asn-183, Asn-212, 240–242, and 253–260; these read GSN and GRNGFGAK. Residues 445–447 form an interaction with DNA region; that stretch reads KKK. An ATP-binding site is contributed by 478-480; that stretch reads QSK. Residues 560 to 677 form the Toprim domain; it reads CTLIITEGDS…NLLKRGFLVE (118 aa). Residues Glu-566, Asp-646, and Asp-648 each contribute to the Mg(2+) site. The Topo IIA-type catalytic domain maps to 810 to 1232; the sequence is IPSLIDGLKP…DPKSLWTADL (423 aa). Tyr-900 functions as the O-(5'-phospho-DNA)-tyrosine intermediate in the catalytic mechanism. Residues 1245–1284 form a disordered region; that stretch reads EFQKKPLKTSSSSSFDVSSSSESAKLSSTRKSKTDKIKSK. The segment covering 1254–1271 has biased composition (low complexity); the sequence is SSSSSFDVSSSSESAKLS.

Belongs to the type II topoisomerase family. Homodimer. Mg(2+) serves as cofactor. The cofactor is Mn(2+). It depends on Ca(2+) as a cofactor.

The protein localises to the mitochondrion. It catalyses the reaction ATP-dependent breakage, passage and rejoining of double-stranded DNA.. Functionally, control of topological states of DNA by transient breakage and subsequent rejoining of DNA strands. Topoisomerase II makes double-strand breaks. This chain is DNA topoisomerase 2, mitochondrial (top2mt), found in Dictyostelium discoideum (Social amoeba).